A 293-amino-acid polypeptide reads, in one-letter code: ELMO domain-containing protein 2 (293 aa).

An ELMO domain is found at 126–282 (QHEKMLLKLW…KFHERIKGLL (157 aa)).

In terms of biological role, acts as a GTPase-activating protein (GAP) toward guanine nucleotide exchange factors like ARL2, ARL3, ARF1 and ARF6, but not for GTPases outside the Arf family. This is ELMO domain-containing protein 2 (Elmod2) from Mus musculus (Mouse).